The chain runs to 130 residues: Lysozyme C (130 aa).

In terms of domain architecture, C-type lysozyme spans 1-130 (KIYERCELAR…LTPYIRGCGV (130 aa)). Cystine bridges form between C6/C128, C30/C116, C65/C81, and C77/C95. Active-site residues include E35 and D53.

Belongs to the glycosyl hydrolase 22 family. As to quaternary structure, monomer.

It localises to the secreted. The enzyme catalyses Hydrolysis of (1-&gt;4)-beta-linkages between N-acetylmuramic acid and N-acetyl-D-glucosamine residues in a peptidoglycan and between N-acetyl-D-glucosamine residues in chitodextrins.. In terms of biological role, lysozymes have primarily a bacteriolytic function; those in tissues and body fluids are associated with the monocyte-macrophage system and enhance the activity of immunoagents. The chain is Lysozyme C (LYZ) from Oryctolagus cuniculus (Rabbit).